Here is a 160-residue protein sequence, read N- to C-terminus: Small ribosomal subunit protein bS6 (160 aa).

Residues arginine 96–glutamine 160 are disordered. Over residues threonine 126–glutamate 145 the composition is skewed to low complexity. Positions proline 151–glutamine 160 are enriched in basic residues.

Belongs to the bacterial ribosomal protein bS6 family.

Functionally, binds together with bS18 to 16S ribosomal RNA. The protein is Small ribosomal subunit protein bS6 of Metamycoplasma arthritidis (strain 158L3-1) (Mycoplasma arthritidis).